The following is a 260-amino-acid chain: MTQTNDKLVIAGREFDSRLMVGTGKYADFQQMVRAIEVSGAQIITVAVRRVNISDRSKESLLDHIDLKKYTLLPNTAGCYTAEDAIRTCRLAREAGLSDFVKLEVLGDEKTLYPNNEELLKAAKVLLAEGFTVLPYTSDDPIICKKLEDMGCAAVMPLGAPIGSGLGIRNPYNIQIILESVKVPVIVDAGVGTASDAAIAMELGCHGVLMNTAIAGAKDPVAMAEAMNCAVRAGRLAYLAGRIPRKLYASASSPLAGLIG.

Lys102 functions as the Schiff-base intermediate with DXP in the catalytic mechanism. 1-deoxy-D-xylulose 5-phosphate-binding positions include Gly163, 189–190, and 211–212; these read AG and NT.

It belongs to the ThiG family. Homotetramer. Forms heterodimers with either ThiH or ThiS.

The protein localises to the cytoplasm. It carries out the reaction [ThiS sulfur-carrier protein]-C-terminal-Gly-aminoethanethioate + 2-iminoacetate + 1-deoxy-D-xylulose 5-phosphate = [ThiS sulfur-carrier protein]-C-terminal Gly-Gly + 2-[(2R,5Z)-2-carboxy-4-methylthiazol-5(2H)-ylidene]ethyl phosphate + 2 H2O + H(+). Its pathway is cofactor biosynthesis; thiamine diphosphate biosynthesis. In terms of biological role, catalyzes the rearrangement of 1-deoxy-D-xylulose 5-phosphate (DXP) to produce the thiazole phosphate moiety of thiamine. Sulfur is provided by the thiocarboxylate moiety of the carrier protein ThiS. In vitro, sulfur can be provided by H(2)S. In Citrifermentans bemidjiense (strain ATCC BAA-1014 / DSM 16622 / JCM 12645 / Bem) (Geobacter bemidjiensis), this protein is Thiazole synthase.